Consider the following 396-residue polypeptide: NADH-ubiquinone oxidoreductase 49 kDa subunit (396 aa).

This sequence belongs to the complex I 49 kDa subunit family.

The protein resides in the mitochondrion. It carries out the reaction a ubiquinone + NADH + 5 H(+)(in) = a ubiquinol + NAD(+) + 4 H(+)(out). Functionally, core subunit of the mitochondrial membrane respiratory chain NADH dehydrogenase (Complex I) that is believed to belong to the minimal assembly required for catalysis. Complex I functions in the transfer of electrons from NADH to the respiratory chain. The immediate electron acceptor for the enzyme is believed to be ubiquinone. Component of the iron-sulfur (IP) fragment of the enzyme. Component of the iron-sulfur (IP) fragment of the enzyme. In Reclinomonas americana, this protein is NADH-ubiquinone oxidoreductase 49 kDa subunit (NAD7).